Reading from the N-terminus, the 529-residue chain is Autophagy-related protein 21 (529 aa).

The segment covering 49–62 (NSLEDSAGCQNPTH) has biased composition (polar residues). The disordered stretch occupies residues 49–70 (NSLEDSAGCQNPTHSKTDSQDT). 2 WD repeats span residues 271-311 (AHHS…GKVK) and 321-361 (GHNL…SDIC). A L/FRRG motif motif is present at residues 318–322 (LRRGH). The tract at residues 362 to 388 (TNENSEDRTNHNSDYEDSDGDTSKSSE) is disordered. Positions 366 to 375 (SEDRTNHNSD) are enriched in basic and acidic residues.

Belongs to the WD repeat PROPPIN family.

The protein resides in the cytoplasm. The protein localises to the membrane. It localises to the vacuole membrane. Its function is as follows. Required for cytoplasm to vacuole transport (Cvt) vesicles formation and mitophagy. Involved in binding of phosphatidylethanolamine to ATG8 and in recruitment of ATG8 and ATG5 to the pre-autophagosomal structure. Protects ATG8 from ARG4-mediated cleavage. This is Autophagy-related protein 21 (ATG21) from Candida albicans (strain SC5314 / ATCC MYA-2876) (Yeast).